We begin with the raw amino-acid sequence, 471 residues long: MSLREPVELLDPSAVGPVYFIAIGGAGMSGVARIYHDLGVEVRGSDQVDSANLRDLASLGVQTWVGHDPSHLAGARTVVVSSAIRPDNPELVEAHRLGLRIWHRSAALAALMLGREGVSIAGTHGKTTTTGMVATMLDCAGADPSYVIGSPLAATGMSSHLGGGEAFVVEADESDGSFLQYPSQIVVVTNVEADHLDNWGTPQAYFDGFVSMATRPEVRYVVTNADDPGAAELACRLESTGTVRVVTYGESEQAEVRLVDLDLNGTTASATLVYGPTQGRLELQVPGRYNLSNAAAAYCVGSLLGISHQDLLTGIASFTGTLRRFQLVGRVADVSVFDDYAHHPTELRATLGAARRVVTGQGRVIACFQPHLFSRTRDFAGEFGSALTLADRVIVSDIYPAREDPIPGVTGELVHDAVIAAGGDSRYVPDKQDLPEALAEEVRPGDLVITLGAGDVTLVGPVLVGLLEGKA.

122–128 (GTHGKTT) contributes to the ATP binding site.

It belongs to the MurCDEF family.

The protein resides in the cytoplasm. The enzyme catalyses UDP-N-acetyl-alpha-D-muramate + L-alanine + ATP = UDP-N-acetyl-alpha-D-muramoyl-L-alanine + ADP + phosphate + H(+). Its pathway is cell wall biogenesis; peptidoglycan biosynthesis. Functionally, cell wall formation. This is UDP-N-acetylmuramate--L-alanine ligase from Cutibacterium acnes (strain DSM 16379 / KPA171202) (Propionibacterium acnes).